The primary structure comprises 192 residues: uncharacterized protein (192 aa).

A disordered region spans residues 168–192 (PLWRKSEAGSRKARTSNSGGPTKRA). The span at 182–192 (TSNSGGPTKRA) shows a compositional bias: polar residues.

To A.xylinum IS1268 ORFA.

This is an uncharacterized protein from Sinorhizobium fredii (strain NBRC 101917 / NGR234).